Reading from the N-terminus, the 475-residue chain is Subtilisin-like protease PopC (475 aa).

Disordered stretches follow at residues 1–27 and 57–106; these read MKSY…EQGE and TLPG…QTGA. A Peptidase S8 domain is found at 165–475; the sequence is NRGMSSLAER…KTGKGLAVFR (311 aa). Catalysis depends on charge relay system residues Asp-201, His-243, and Ser-423.

The protein belongs to the peptidase S8 family. As to quaternary structure, interacts with PopD in non-starving cells.

The protein resides in the cytoplasm. Its subcellular location is the periplasm. The protein localises to the secreted. Its activity is regulated as follows. In non-starving cells, secretion and protease activity are inhibited by formation of a cytoplasmic complex with PopD. In response to starvation, PopD is degraded in a RelA- and FtsH(D)-dependent manner, thereby releasing pre-formed PopC for secretion. Secreted and active during starvation, and rapidly degraded upon secretion. Secretion is significantly and reversibly reduced by carbonyl cyanide m-chlorophenyl hydrazine (CCCP), which dissipates or reduces the proton motive force (PMF), and by nigericin, which affects the pH gradient. Functionally, required for fruiting body formation, a multicellular developmental program that is induced in response to starvation. Acts as a subtilisin-like protease that directly cleaves the CsgA precursor protein (p25) on the cell surface to generate the intercellular C-signal protein (p17) in starving cells. Preferentially acts in cis, i.e. PopC secreted by a cell only cleaves p25 on that cell. May also be important for processing of other protein(s) that are important for development. The chain is Subtilisin-like protease PopC from Myxococcus xanthus (strain DK1622).